We begin with the raw amino-acid sequence, 178 residues long: Nicotinamide-nucleotide adenylyltransferase (178 aa).

Belongs to the archaeal NMN adenylyltransferase family.

The protein resides in the cytoplasm. It carries out the reaction beta-nicotinamide D-ribonucleotide + ATP + H(+) = diphosphate + NAD(+). It functions in the pathway cofactor biosynthesis; NAD(+) biosynthesis; NAD(+) from nicotinamide D-ribonucleotide: step 1/1. The sequence is that of Nicotinamide-nucleotide adenylyltransferase from Caldivirga maquilingensis (strain ATCC 700844 / DSM 13496 / JCM 10307 / IC-167).